Consider the following 144-residue polypeptide: Large ribosomal subunit protein uL16 (144 aa).

Basic residues predominate over residues 1 to 14 (MLMPKRVKYRKPHR). The tract at residues 1 to 25 (MLMPKRVKYRKPHRPGTQGKATRGN) is disordered.

This sequence belongs to the universal ribosomal protein uL16 family. In terms of assembly, part of the 50S ribosomal subunit.

Binds 23S rRNA and is also seen to make contacts with the A and possibly P site tRNAs. This is Large ribosomal subunit protein uL16 from Moorella thermoacetica (strain ATCC 39073 / JCM 9320).